The primary structure comprises 73 residues: Large ribosomal subunit protein bL31 (73 aa).

Residues Cys16, Cys18, Cys36, and Cys39 each contribute to the Zn(2+) site.

Belongs to the bacterial ribosomal protein bL31 family. Type A subfamily. As to quaternary structure, part of the 50S ribosomal subunit. Zn(2+) serves as cofactor.

Functionally, binds the 23S rRNA. The sequence is that of Large ribosomal subunit protein bL31 from Myxococcus xanthus (strain DK1622).